The chain runs to 2961 residues: Zinc finger ZZ-type and EF-hand domain-containing protein 1 (2961 aa).

The tract at residues 1–41 (MGNAPSHSSEDEAAAAGGEGWGPHQDWAAVSGTTPGPGVAA) is disordered. A lipid anchor (N-myristoyl glycine) is attached at glycine 2. In terms of domain architecture, EF-hand spans 111-146 (CSSEQFEEAFAQFDAEGDGTVDAENMLEALKNSSGA). Residues 226 to 405 (LVQKEKESPG…AIWYWSLLTS (180 aa)) enclose the DOC domain. Phosphoserine occurs at positions 240, 1475, 1488, and 1509. The interval 1446-1531 (TADETSHLQP…PTRRPPFTRG (86 aa)) is disordered. Residues 1485–1502 (GDQSPGLGTQPKLPSSSG) show a composition bias toward polar residues. Residue threonine 1512 is modified to Phosphothreonine. Low complexity predominate over residues 1516-1531 (PLSPSTPTRRPPFTRG). Residue serine 1518 is modified to Phosphoserine. A phosphothreonine mark is found at threonine 1521 and threonine 1523. Phosphoserine is present on residues serine 1537 and serine 1540. 2 consecutive ZZ-type zinc fingers follow at residues 1778 to 1833 (NVDI…FTCD) and 1827 to 1882 (NMEF…MVTI). Zn(2+) contacts are provided by cysteine 1783, cysteine 1786, cysteine 1797, cysteine 1800, cysteine 1806, cysteine 1809, histidine 1819, histidine 1823, cysteine 1832, cysteine 1835, cysteine 1846, cysteine 1849, cysteine 1855, cysteine 1858, histidine 1868, and histidine 1872. Disordered regions lie at residues 1994–2078 (AVQG…PSPE) and 2426–2455 (LELD…KLDP). Over residues 2009 to 2027 (AVHEEIRPVDFKQRNKADK) the composition is skewed to basic and acidic residues. A compositionally biased stretch (polar residues) spans 2033–2043 (KDPSCQTQISD). Residues 2426–2440 (LELDERGDREEEVER) show a composition bias toward basic and acidic residues. A Phosphoserine modification is found at serine 2444. Lysine 2667 is subject to N6-acetyllysine.

Interacts with KLF6 and KLF9. Interacts via (ZZ-type 2 zinc finger) with histone H3 trimethylated at 'Lys-4' (H3K4me3) and histone H3 acetylated at 'Lys-4' (H3K4ac). As to expression, expressed at low levels in cerebellum.

Histone H3 reader which may act as a transcriptional coactivator for KLF6 and KLF9 transcription factors. This chain is Zinc finger ZZ-type and EF-hand domain-containing protein 1, found in Homo sapiens (Human).